The chain runs to 163 residues: Urease accessory protein UreE (163 aa).

The disordered stretch occupies residues 144 to 163; the sequence is QPEPGAYGGSSAGSHDGHHH.

Belongs to the UreE family.

It is found in the cytoplasm. Functionally, involved in urease metallocenter assembly. Binds nickel. Probably functions as a nickel donor during metallocenter assembly. The protein is Urease accessory protein UreE of Aliivibrio fischeri (strain MJ11) (Vibrio fischeri).